A 133-amino-acid polypeptide reads, in one-letter code: Cytochrome c-554 (133 aa).

Pyrrolidone carboxylic acid is present on Q1. Heme c-binding residues include M17, C122, C125, and H126.

Binds 1 heme c group covalently per subunit.

Its subcellular location is the periplasm. Its function is as follows. Monoheme c-type cytochrome, that is particularly expressed when cells generate energy via aerobic respiration. The polypeptide is Cytochrome c-554 (cycF) (Cereibacter sphaeroides (Rhodobacter sphaeroides)).